Reading from the N-terminus, the 213-residue chain is Dephospho-CoA kinase (213 aa).

Residues 3–202 (RIGLTGGIGS…QSYLALADKH (200 aa)) enclose the DPCK domain. 11–16 (GSGKTR) serves as a coordination point for ATP.

The protein belongs to the CoaE family.

It localises to the cytoplasm. It carries out the reaction 3'-dephospho-CoA + ATP = ADP + CoA + H(+). Its pathway is cofactor biosynthesis; coenzyme A biosynthesis; CoA from (R)-pantothenate: step 5/5. Catalyzes the phosphorylation of the 3'-hydroxyl group of dephosphocoenzyme A to form coenzyme A. The protein is Dephospho-CoA kinase of Bordetella avium (strain 197N).